The primary structure comprises 84 residues: RNA-binding protein Hfq (84 aa).

The 61-residue stretch at 9–69 (DRFLNILRTN…VSTIMPESFV (61 aa)) folds into the Sm domain.

This sequence belongs to the Hfq family. As to quaternary structure, homohexamer.

Its function is as follows. RNA chaperone that binds small regulatory RNA (sRNAs) and mRNAs to facilitate mRNA translational regulation in response to envelope stress, environmental stress and changes in metabolite concentrations. Also binds with high specificity to tRNAs. The chain is RNA-binding protein Hfq from Thermosipho africanus (strain TCF52B).